The sequence spans 422 residues: Glucose-1-phosphate adenylyltransferase (422 aa).

Residues Tyr-109, Gly-175, 190 to 191, and Ser-208 each bind alpha-D-glucose 1-phosphate; that span reads EK.

Belongs to the bacterial/plant glucose-1-phosphate adenylyltransferase family. Homotetramer.

The enzyme catalyses alpha-D-glucose 1-phosphate + ATP + H(+) = ADP-alpha-D-glucose + diphosphate. The protein operates within glycan biosynthesis; glycogen biosynthesis. Involved in the biosynthesis of ADP-glucose, a building block required for the elongation reactions to produce glycogen. Catalyzes the reaction between ATP and alpha-D-glucose 1-phosphate (G1P) to produce pyrophosphate and ADP-Glc. In Shewanella amazonensis (strain ATCC BAA-1098 / SB2B), this protein is Glucose-1-phosphate adenylyltransferase.